A 746-amino-acid polypeptide reads, in one-letter code: Polyribonucleotide nucleotidyltransferase (746 aa).

Positions 490 and 496 each coordinate Mg(2+). The KH domain maps to 557-619 (PRIETMIIGK…ATIDAAVKAI (63 aa)). One can recognise an S1 motif domain in the interval 629–699 (GEVYEGKISS…KTGKFKLSRK (71 aa)). The interval 701–746 (LLPKPEGYEERPPRPERGERGPRQDRGDRGPRQDRGDRGPRREYRD) is disordered. Basic and acidic residues predominate over residues 706–746 (EGYEERPPRPERGERGPRQDRGDRGPRQDRGDRGPRREYRD).

This sequence belongs to the polyribonucleotide nucleotidyltransferase family. Requires Mg(2+) as cofactor.

Its subcellular location is the cytoplasm. The catalysed reaction is RNA(n+1) + phosphate = RNA(n) + a ribonucleoside 5'-diphosphate. Functionally, involved in mRNA degradation. Catalyzes the phosphorolysis of single-stranded polyribonucleotides processively in the 3'- to 5'-direction. The polypeptide is Polyribonucleotide nucleotidyltransferase (Parabacteroides distasonis (strain ATCC 8503 / DSM 20701 / CIP 104284 / JCM 5825 / NCTC 11152)).